We begin with the raw amino-acid sequence, 1208 residues long: E3 ubiquitin-protein ligase DZIP3 (1208 aa).

The span at 10–29 shows a compositional bias: basic and acidic residues; sequence VRHPAVEDQRKEETENKLEK. 2 disordered regions span residues 10-38 and 637-698; these read VRHPAVEDQRKEETENKLEKSSGQLNKQE and GTSI…PHSV. Coiled coils occupy residues 14–43, 647–676, 792–853, and 904–939; these read AVEDQRKEETENKLEKSSGQLNKQENDIPT, ESLKDLQEVKSKQRKKKKTKNKKNKDSKED, IASL…SKLN, and QLKAAVDSWNAIVADVRNKIAFLRTQYNEQINKVKQ. Residues 637–647 show a composition bias toward polar residues; it reads GTSIPSESSTE. Residues 648–657 are compositionally biased toward basic and acidic residues; the sequence is SLKDLQEVKS. A compositionally biased stretch (basic residues) spans 658 to 669; the sequence is KQRKKKKTKNKK. Over residues 670-693 the composition is skewed to basic and acidic residues; that stretch reads NKDSKEDQVPYVVEKEEQLRKEQA. The interval 1088 to 1145 is disordered; it reads KSQSQGKSVSNVNCVSPSHSPSQPDAAQPPKPAWRPLTSQGPATWEGASNPDEEEEEE. Polar residues predominate over residues 1089 to 1112; the sequence is SQSQGKSVSNVNCVSPSHSPSQPD. The RING-type; atypical zinc finger occupies 1148–1188; it reads CVICHENLSPENLSVLPCAHKFHAQCIRPWLMQQGTCPTCR.

Interacts with DAZ proteins. In terms of tissue distribution, widely expressed at low level. Highly expressed in skeletal muscle, kidney and heart. Expressed at low level in placenta, lung, brain, liver and pancreas.

Its subcellular location is the cytoplasm. It carries out the reaction S-ubiquitinyl-[E2 ubiquitin-conjugating enzyme]-L-cysteine + [acceptor protein]-L-lysine = [E2 ubiquitin-conjugating enzyme]-L-cysteine + N(6)-ubiquitinyl-[acceptor protein]-L-lysine.. The protein operates within protein modification; protein ubiquitination. Its function is as follows. E3 Ubiquitin ligase proteins mediate ubiquitination and subsequent proteasomal degradation of target proteins. E3 ubiquitin ligases accept ubiquitin from an E2 ubiquitin-conjugating enzyme in the form of a thioester and then directly transfers the ubiquitin to targeted substrates. Able to specifically bind RNA. The sequence is that of E3 ubiquitin-protein ligase DZIP3 (DZIP3) from Homo sapiens (Human).